The sequence spans 558 residues: Factor VII-activating protease (558 aa).

An N-terminal signal peptide occupies residues 1–23 (MFVRMLVFRVLLLIALVGKSVIG). EGF-like domains lie at 71 to 107 (DDDP…SRCQ), 109 to 146 (AQNK…PDCS), and 148 to 186 (VLPA…KFCE). 18 disulfides stabilise this stretch: cysteine 75/cysteine 86, cysteine 80/cysteine 95, cysteine 97/cysteine 106, cysteine 113/cysteine 123, cysteine 118/cysteine 134, cysteine 136/cysteine 145, cysteine 152/cysteine 163, cysteine 157/cysteine 174, cysteine 176/cysteine 185, cysteine 192/cysteine 274, cysteine 213/cysteine 255, cysteine 244/cysteine 269, cysteine 299/cysteine 433, cysteine 345/cysteine 361, cysteine 353/cysteine 422, cysteine 445/cysteine 513, cysteine 475/cysteine 491, and cysteine 503/cysteine 531. Residues 191–274 (DCYVGDGYSY…KWEYCDVTVC (84 aa)) form the Kringle domain. The 242-residue stretch at 312–553 (IYGGFKSTAG…FLNWIKTTMH (242 aa)) folds into the Peptidase S1 domain. Active-site charge relay system residues include histidine 360 and aspartate 409. Serine 507 functions as the Charge relay system in the catalytic mechanism.

This sequence belongs to the peptidase S1 family. Heterodimer; disulfide-linked. Heterodimer of a 50 kDa heavy and a 27 kDa light chain linked by a disulfide bond. Post-translationally, proteolytic cleavage at Gly-23 or Met-27 can give rise to the 50 kDa heavy chain (HC) and cleavage at Arg-311 or Lys-317 can give rise to the 27 kDa light chain (LC). The HC can undergo further proteolytic cleavage giving rise to a 26 kDa fragment. The LC can undergo further proteolytic cleavage at Arg-311 leading to a 17-kDa fragment and at Arg-478 leading to a 8-kDa fragment. In terms of tissue distribution, liver and kidney.

The protein resides in the secreted. Functionally, cleaves the alpha-chain at multiple sites and the beta-chain between 'Lys-53' and 'Lys-54' but not the gamma-chain of fibrinogen and therefore does not initiate the formation of the fibrin clot and does not cause the fibrinolysis directly. It does not cleave (activate) prothrombin and plasminogen but converts the inactive single chain urinary plasminogen activator (pro-urokinase) to the active two chain form. Activates coagulation factor VII. May function as a tumor suppressor negatively regulating cell proliferation and cell migration. The polypeptide is Factor VII-activating protease (Mus musculus (Mouse)).